A 101-amino-acid polypeptide reads, in one-letter code: NADH-quinone oxidoreductase subunit K (101 aa).

A run of 3 helical transmembrane segments spans residues 4 to 24 (LGHL…GIFL), 30 to 50 (IVLL…FIAF), and 62 to 82 (FVFF…AILV).

It belongs to the complex I subunit 4L family. NDH-1 is composed of 14 different subunits. Subunits NuoA, H, J, K, L, M, N constitute the membrane sector of the complex.

The protein resides in the cell inner membrane. It carries out the reaction a quinone + NADH + 5 H(+)(in) = a quinol + NAD(+) + 4 H(+)(out). Functionally, NDH-1 shuttles electrons from NADH, via FMN and iron-sulfur (Fe-S) centers, to quinones in the respiratory chain. The immediate electron acceptor for the enzyme in this species is believed to be ubiquinone. Couples the redox reaction to proton translocation (for every two electrons transferred, four hydrogen ions are translocated across the cytoplasmic membrane), and thus conserves the redox energy in a proton gradient. The protein is NADH-quinone oxidoreductase subunit K of Xanthomonas axonopodis pv. citri (strain 306).